Consider the following 158-residue polypeptide: 2-C-methyl-D-erythritol 2,4-cyclodiphosphate synthase (158 aa).

Positions 9 and 11 each coordinate a divalent metal cation. 4-CDP-2-C-methyl-D-erythritol 2-phosphate-binding positions include 9-11 and 35-36; these read DVH and HS. H43 serves as a coordination point for a divalent metal cation. 4-CDP-2-C-methyl-D-erythritol 2-phosphate contacts are provided by residues 57 to 59, 62 to 66, 133 to 136, F140, and R143; these read DLG, FPDTD, and TTTE.

The protein belongs to the IspF family. As to quaternary structure, homotrimer. A divalent metal cation is required as a cofactor.

The catalysed reaction is 4-CDP-2-C-methyl-D-erythritol 2-phosphate = 2-C-methyl-D-erythritol 2,4-cyclic diphosphate + CMP. Its pathway is isoprenoid biosynthesis; isopentenyl diphosphate biosynthesis via DXP pathway; isopentenyl diphosphate from 1-deoxy-D-xylulose 5-phosphate: step 4/6. Functionally, involved in the biosynthesis of isopentenyl diphosphate (IPP) and dimethylallyl diphosphate (DMAPP), two major building blocks of isoprenoid compounds. Catalyzes the conversion of 4-diphosphocytidyl-2-C-methyl-D-erythritol 2-phosphate (CDP-ME2P) to 2-C-methyl-D-erythritol 2,4-cyclodiphosphate (ME-CPP) with a corresponding release of cytidine 5-monophosphate (CMP). The polypeptide is 2-C-methyl-D-erythritol 2,4-cyclodiphosphate synthase (Desulfitobacterium hafniense (strain DSM 10664 / DCB-2)).